A 257-amino-acid polypeptide reads, in one-letter code: Short chain dehydrogenase prhI (257 aa).

Residues 7-29 (HVVIITGSSSGIGLAASTLALAS) form a helical membrane-spanning segment. Ile-11 serves as a coordination point for NADP(+). A glycan (N-linked (GlcNAc...) asparagine) is linked at Asn-50. Asp-57 is a binding site for NADP(+). N-linked (GlcNAc...) asparagine glycans are attached at residues Asn-92 and Asn-110. Arg-119, Tyr-151, Lys-155, and Val-184 together coordinate NADP(+). The active-site Proton acceptor is Tyr-151. Lys-155 acts as the Lowers pKa of active site Tyr in catalysis.

This sequence belongs to the short-chain dehydrogenases/reductases (SDR) family.

The protein localises to the membrane. The catalysed reaction is protoaustinoid A + A = protoaustinoid B + AH2. It participates in secondary metabolite biosynthesis; terpenoid biosynthesis. In terms of biological role, short chain dehydrogenase; part of the gene cluster that mediates the biosynthesis of paraherquonin, a meroterpenoid with a unique, highly congested hexacyclic molecular architecture. The first step of the pathway is the synthesis of 3,5-dimethylorsellinic acid (DMOA) by the polyketide synthase prhL. Synthesis of DMOA is followed by farnesylation by the prenyltransferase prhE, methylesterification by the methyl-transferase prhM, epoxidation of the prenyl chain by the flavin-dependent monooxygenase prhF, and cyclization of the farnesyl moiety by the terpene cyclase prhH, to yield the tetracyclic intermediate, protoaustinoid A. The short chain dehydrogenase prhI then oxidizes the C-3 alcohol group of the terpene cyclase product to transform protoaustinoid A into protoaustinoid B. The FAD-binding monooxygenase prhJ catalyzes the oxidation of protoaustinoid B into preaustinoid A which is further oxidized into preaustinoid A1 by FAD-binding monooxygenase phrK. Finally, prhA leads to berkeleydione via the berkeleyone B intermediate. PrhA is a multifunctional dioxygenase that first desaturates at C5-C6 to form berkeleyone B, followed by rearrangement of the A/B-ring to form the cycloheptadiene moiety in berkeleydione. Berkeleydione serves as the key intermediate for the biosynthesis of paraherquonin as well as many other meroterpenoids. The cytochrome P450 monooxygenases prhB, prhD, and prhN, as well as the isomerase prhC, are probably involved in the late stage of paraherquonin biosynthesis, after the production of berkeleydione. Especially prhC might be a multifunctional enzyme that catalyzes the D-ring expansion via intramolecular methoxy rearrangement, as well as the hydrolysis of the expanded D-ring. The chain is Short chain dehydrogenase prhI from Penicillium brasilianum.